The chain runs to 413 residues: Multifunctional CCA protein (413 aa).

The ATP site is built by glycine 8 and arginine 11. The CTP site is built by glycine 8 and arginine 11. 2 residues coordinate Mg(2+): aspartate 21 and aspartate 23. The ATP site is built by arginine 91, arginine 137, and arginine 140. Residues arginine 91, arginine 137, and arginine 140 each coordinate CTP. The region spanning threonine 228 to tryptophan 329 is the HD domain.

This sequence belongs to the tRNA nucleotidyltransferase/poly(A) polymerase family. Bacterial CCA-adding enzyme type 1 subfamily. Monomer. Can also form homodimers and oligomers. It depends on Mg(2+) as a cofactor. Ni(2+) serves as cofactor.

It carries out the reaction a tRNA precursor + 2 CTP + ATP = a tRNA with a 3' CCA end + 3 diphosphate. The enzyme catalyses a tRNA with a 3' CCA end + 2 CTP + ATP = a tRNA with a 3' CCACCA end + 3 diphosphate. In terms of biological role, catalyzes the addition and repair of the essential 3'-terminal CCA sequence in tRNAs without using a nucleic acid template. Adds these three nucleotides in the order of C, C, and A to the tRNA nucleotide-73, using CTP and ATP as substrates and producing inorganic pyrophosphate. tRNA 3'-terminal CCA addition is required both for tRNA processing and repair. Also involved in tRNA surveillance by mediating tandem CCA addition to generate a CCACCA at the 3' terminus of unstable tRNAs. While stable tRNAs receive only 3'-terminal CCA, unstable tRNAs are marked with CCACCA and rapidly degraded. This Salmonella choleraesuis (strain SC-B67) protein is Multifunctional CCA protein.